Reading from the N-terminus, the 334-residue chain is Glyceraldehyde-3-phosphate dehydrogenase (334 aa).

Residues 12–13 (RI), Asp35, Arg79, and Ser121 each bind NAD(+). D-glyceraldehyde 3-phosphate is bound by residues 152-154 (SCT), Thr183, Arg198, 211-212 (TG), and Arg234. Cys153 (nucleophile) is an active-site residue. Residue Asn315 coordinates NAD(+).

This sequence belongs to the glyceraldehyde-3-phosphate dehydrogenase family. In terms of assembly, homotetramer.

It is found in the cytoplasm. The catalysed reaction is D-glyceraldehyde 3-phosphate + phosphate + NAD(+) = (2R)-3-phospho-glyceroyl phosphate + NADH + H(+). It functions in the pathway carbohydrate degradation; glycolysis; pyruvate from D-glyceraldehyde 3-phosphate: step 1/5. Catalyzes the oxidative phosphorylation of glyceraldehyde 3-phosphate (G3P) to 1,3-bisphosphoglycerate (BPG) using the cofactor NAD. The first reaction step involves the formation of a hemiacetal intermediate between G3P and a cysteine residue, and this hemiacetal intermediate is then oxidized to a thioester, with concomitant reduction of NAD to NADH. The reduced NADH is then exchanged with the second NAD, and the thioester is attacked by a nucleophilic inorganic phosphate to produce BPG. This Corynebacterium glutamicum (strain ATCC 13032 / DSM 20300 / JCM 1318 / BCRC 11384 / CCUG 27702 / LMG 3730 / NBRC 12168 / NCIMB 10025 / NRRL B-2784 / 534) protein is Glyceraldehyde-3-phosphate dehydrogenase (gap).